Consider the following 832-residue polypeptide: Golgin subfamily A member 6-like protein 24 (832 aa).

5 disordered regions span residues 1–107 (MWPQ…QEAL), 303–333 (QEQE…MRRQ), 351–431 (MHEQ…EMWR), 508–652 (QEEM…EQEE), and 664–832 (QEEM…MQEH). Over residues 13–27 (LPTHPHLPTHPHLPT) the composition is skewed to basic residues. The segment covering 37-58 (MSKETRQSKLAEAKEQLTDHHP) has biased composition (basic and acidic residues). Composition is skewed to polar residues over residues 59–69 (QTNPSVGTAAS) and 77–89 (NNGT…TSGG). The span at 92–107 (SPEDEQKASHQHQEAL) shows a compositional bias: basic and acidic residues. A coiled-coil region spans residues 163–828 (LEQALSAVAT…EVRLRQQEEK (666 aa)). Basic and acidic residues-rich tracts occupy residues 664–684 (QEEM…KMWE) and 692–832 (QEEK…MQEH).

It belongs to the GOLGA6 family.

This is Golgin subfamily A member 6-like protein 24 from Homo sapiens (Human).